A 235-amino-acid chain; its full sequence is 2,3-bisphosphoglycerate-dependent phosphoglycerate mutase 1 (235 aa).

Residues 8-15 (RHGESVAN), 21-22 (TG), R60, 87-90 (ERHY), K98, and 114-115 (RR) contribute to the substrate site. Residue H9 is the Tele-phosphohistidine intermediate of the active site. The Proton donor/acceptor role is filled by E87.

The protein belongs to the phosphoglycerate mutase family. BPG-dependent PGAM subfamily.

The enzyme catalyses (2R)-2-phosphoglycerate = (2R)-3-phosphoglycerate. It participates in carbohydrate degradation; glycolysis; pyruvate from D-glyceraldehyde 3-phosphate: step 3/5. Catalyzes the interconversion of 2-phosphoglycerate and 3-phosphoglycerate. This is 2,3-bisphosphoglycerate-dependent phosphoglycerate mutase 1 from Latilactobacillus sakei subsp. sakei (strain 23K) (Lactobacillus sakei subsp. sakei).